The primary structure comprises 435 residues: Membrane-bound ghrelin O-acyltransferase MBOAT4 (435 aa).

Topologically, residues 1-5 are lumenal; sequence MDWLQ. A helical transmembrane segment spans residues 6–26; it reads LFFLHPLSFYQGAAFPFALLF. Residues 27 to 40 lie on the Cytoplasmic side of the membrane; it reads NYLCILDTFSTRAR. A helical membrane pass occupies residues 41-56; that stretch reads YLFLLAGGGVLAFAAM. Over 57-59 the chain is Lumenal; it reads GPY. The helical transmembrane segment at 60–76 threads the bilayer; that stretch reads SLLIFIPALCAVALVSF. Residues 77 to 82 are Cytoplasmic-facing; that stretch reads LSPQEV. The chain crosses the membrane as a helical span at residues 83–101; sequence HRLTFFFQMGWQTLCHLGL. Residues 102-120 lie on the Lumenal side of the membrane; that stretch reads HYTEYYLGEPPPVRFYITL. The chain crosses the membrane as a helical span at residues 121 to 136; the sequence is SSLMLLTQRVTSLSLD. Residues 137–206 are Cytoplasmic-facing; the sequence is ICEGKVEAPR…YPSISFRALT (70 aa). A helical transmembrane segment spans residues 207–227; sequence WRGLQILGLECLKVALRSAVS. The Lumenal portion of the chain corresponds to 228 to 240; sequence AGAGLDDCQRLEC. Residues 241 to 261 traverse the membrane as a helical segment; it reads IYLMWSTAWLFKLTYYSHWIL. The Cytoplasmic portion of the chain corresponds to 262 to 324; it reads DDSLLHAAGF…RRLVFRKSRR (63 aa). Active-site residues include N307 and H338. Residues 325-338 form a helical membrane-spanning segment; sequence WPLLQTFAFSAWWH. The Lumenal segment spans residues 339–340; it reads GL. Residues 341-357 traverse the membrane as a helical segment; that stretch reads HPGQVFGFLCWSVMVKA. The Cytoplasmic segment spans residues 358 to 376; the sequence is DYLIHTFANVCIRSWPLRL. A helical membrane pass occupies residues 377–397; the sequence is LYRALTWAHTQLIIAYIMLAV. The Lumenal portion of the chain corresponds to 398 to 407; the sequence is EGRSLSSLCQ. The chain crosses the membrane as a helical span at residues 408 to 428; it reads LCCSYNSLFPVMYGLLLFLLA. The Cytoplasmic portion of the chain corresponds to 429–435; it reads ERKDKRN.

This sequence belongs to the membrane-bound acyltransferase family. Monomer. In terms of processing, not glycosylated. As to expression, highly expressed in stomach and pancreas. Lower expression in small intestine and colon. Very low expression in testis.

It localises to the endoplasmic reticulum membrane. The enzyme catalyses octanoyl-CoA + L-seryl-[protein] = O-octanoyl-L-seryl-[protein] + CoA. It catalyses the reaction hexanoyl-CoA + L-seryl-[protein] = O-hexanoyl-L-seryl-[protein] + CoA. The catalysed reaction is decanoyl-CoA + L-seryl-[protein] = O-decanoyl-L-seryl-[protein] + CoA. It carries out the reaction L-seryl-[protein] + acetyl-CoA = O-acetyl-L-seryl-[protein] + CoA. The enzyme catalyses L-seryl-[protein] + butanoyl-CoA = O-butanoyl-L-seryl-[protein] + CoA. It catalyses the reaction pentanoyl-CoA + L-seryl-[protein] = O-pentanoyl-L-seryl-[protein] + CoA. The catalysed reaction is heptanoyl-CoA + L-seryl-[protein] = O-heptanoyl-L-seryl-[protein] + CoA. It carries out the reaction nonanoyl-CoA + L-seryl-[protein] = O-nonanoyl-L-seryl-[protein] + CoA. The enzyme catalyses L-seryl-[protein] + dodecanoyl-CoA = O-dodecanoyl-L-seryl-[protein] + CoA. It catalyses the reaction L-seryl-[protein] + tetradecanoyl-CoA = O-tetradecanoyl-L-seryl-[protein] + CoA. The catalysed reaction is a fatty acyl-CoA + L-seryl-[protein] = O-fatty acyl-L-seryl-[protein] + CoA. With respect to regulation, inhibited by 1-[2-cyano-3,12-dioxooleana-1,9(11)- dien-28-oyl]ethylamide (CDDO-EA) with an IC(50) of 60 uM. Inhibited by Fe3+ and Cu2+ and the O-acyltransferase activity is completely blocked over 5 mM Fe3+ and 0.5 mM Cu2+. Catalyzes ghrelin acylation at 'Ser-3' using preferentially octanoyl-CoA, hexanoyl-CoA and decanoyl-CoA as acyl-CoA donors leading to ghrelin activity. In vitro also uses acyl-CoA donors of different lengths from short-chain (C2) to long-chain fatty acids (C16) knowing that acyl-CoA donors from butanoyl-CoA (C4) to dodecanoyl-CoA (C12) are more efficient compared to longer acyl-CoA donors, such as myristoyl-CoA (C14) and palmitoyl-CoA (C16) that are not efficient. In terms of biological role, inactive octanoyltransferase activity. This is Membrane-bound ghrelin O-acyltransferase MBOAT4 from Mus musculus (Mouse).